Consider the following 512-residue polypeptide: Protein spinster homolog 3 (512 aa).

A disordered region spans residues 1–30; the sequence is MAGGMSAECPEPGPGGLQGQSPGPGRQCPP. A run of 12 helical transmembrane segments spans residues 50 to 70, 84 to 104, 112 to 132, 145 to 165, 173 to 193, 204 to 224, 260 to 280, 309 to 329, 343 to 365, 377 to 397, 411 to 431, and 450 to 470; these read VLCY…GVLL, GLLQ…FGYL, ATMS…SFIS, IVGT…GDLF, VLAV…VLGS, WALR…ILLV, FVWS…LGFW, LIFG…GAEA, LICA…LAPT, GELL…SVVV, VGHI…SSVL, and FLCC…TALY. The tract at residues 481-512 is disordered; it reads PVTGTPDSNDVDSNDLERQGLLSGAGASTEEP.

This sequence belongs to the major facilitator superfamily. Spinster (TC 2.A.1.49) family.

The protein localises to the membrane. Sphingolipid transporter. In Homo sapiens (Human), this protein is Protein spinster homolog 3 (SPNS3).